The sequence spans 319 residues: Histidinol-phosphate aminotransferase 1 (319 aa).

N6-(pyridoxal phosphate)lysine is present on K182.

Belongs to the class-II pyridoxal-phosphate-dependent aminotransferase family. Histidinol-phosphate aminotransferase subfamily. It depends on pyridoxal 5'-phosphate as a cofactor.

It carries out the reaction L-histidinol phosphate + 2-oxoglutarate = 3-(imidazol-4-yl)-2-oxopropyl phosphate + L-glutamate. It participates in amino-acid biosynthesis; L-histidine biosynthesis; L-histidine from 5-phospho-alpha-D-ribose 1-diphosphate: step 7/9. This Archaeoglobus fulgidus (strain ATCC 49558 / DSM 4304 / JCM 9628 / NBRC 100126 / VC-16) protein is Histidinol-phosphate aminotransferase 1 (hisC1).